The sequence spans 477 residues: MLTPLAPSVKRAPRKTLFAKPYVQVLVAILLGVAVGHFYPQIGENLKPLGDAFIKLVKMIIAPVIFLTVSTGIAGMSDLQKVGRVAGKAMVYFVTFSTLALIVGLIVGNVIQPGAGLNIDLTSLDVQAVNGYASKAHEQSVTGFLMNMIPTTIVGAFVEGDILQVLFFSVLFGIALAMVGESGKSVLSFLQDLTAPVFKLVGILMKAAPIGAFGAMAFTIGKYGIGSVANLAMLVGTFYLTAFLFVFGVLGAVCRYNGFSIFSLIRYIKEELLLVLGTSSSEAALPSLMEKMEKAGAKRSVVGLVIPTGYSFNLDGTNIYMTLAALFIAQATNTDLSVGDQVLLLLVAMLSSKGAAGVTGAGFVTLAATLSVVPAVPVAGMALILGVDRFMSECRALTNLVGNAVASLVVARWEGELDQAQLKAAFCGHQPAETSAGQPLITPAPSNSAASLPVESPGWSQTPDDRAAGSKQTLAGR.

The next 8 helical transmembrane spans lie at 21–39 (PYVQ…GHFY), 59–76 (MIIA…IAGM), 89–111 (AMVY…GNVI), 162–179 (ILQV…LAMV), 200–221 (LVGI…FTIG), 231–253 (LAML…LGAV), 342–364 (VLLL…AGFV), and 368–387 (ATLS…ILGV). Residues 435–477 (SAGQPLITPAPSNSAASLPVESPGWSQTPDDRAAGSKQTLAGR) are disordered.

This sequence belongs to the dicarboxylate/amino acid:cation symporter (DAACS) (TC 2.A.23) family.

It localises to the cell inner membrane. Functionally, responsible for the transport of dicarboxylates such as succinate, fumarate, and malate from the periplasm across the membrane. This transport system plays an important role in the energy supply of rhizobium-legume symbionts. This is C4-dicarboxylate transport protein 1 (dctA1) from Mesorhizobium japonicum (strain LMG 29417 / CECT 9101 / MAFF 303099) (Mesorhizobium loti (strain MAFF 303099)).